The sequence spans 424 residues: Protein CapL (424 aa).

Belongs to the UDP-glucose/GDP-mannose dehydrogenase family.

The protein operates within capsule biogenesis; capsule polysaccharide biosynthesis. Its function is as follows. Required for the biosynthesis of type 1 capsular polysaccharide. The chain is Protein CapL (capL) from Staphylococcus aureus.